The primary structure comprises 206 residues: Shieldin complex subunit 1 (206 aa).

3 stretches are compositionally biased toward polar residues: residues 1–15 (MATQETTPGSQTEES), 33–43 (RPSQQTNSEAF), and 60–69 (DSSNLNTEQN). 2 disordered regions span residues 1-21 (MATQETTPGSQTEESNALDLP) and 33-69 (RPSQQTNSEAFSSEEACSIPCSSDVDPDSSNLNTEQN).

As to quaternary structure, component of the shieldin complex, consisting of SHLD1, SHLD2, SHLD3 and MAD2L2/REV7. Within the complex, SHLD2 forms a scaffold which interacts with a SHLD3-MAD2L2 subcomplex via its N-terminus, and with SHLD1 via its C-terminus. Interacts with ASTE1.

Its subcellular location is the chromosome. Its function is as follows. Component of the shieldin complex, which plays an important role in repair of DNA double-stranded breaks (DSBs). During G1 and S phase of the cell cycle, the complex functions downstream of TP53BP1 to promote non-homologous end joining (NHEJ) and suppress DNA end resection. Mediates various NHEJ-dependent processes including immunoglobulin class-switch recombination, and fusion of unprotected telomeres. This Bos taurus (Bovine) protein is Shieldin complex subunit 1.